Here is a 75-residue protein sequence, read N- to C-terminus: Small ribosomal subunit protein eS17 (75 aa).

It belongs to the eukaryotic ribosomal protein eS17 family.

This Thermoplasma acidophilum (strain ATCC 25905 / DSM 1728 / JCM 9062 / NBRC 15155 / AMRC-C165) protein is Small ribosomal subunit protein eS17.